We begin with the raw amino-acid sequence, 411 residues long: Nuclear receptor subfamily 2 group F member 1-A (411 aa).

The segment at 1 to 68 (MAMVVSVWRD…AGDKGSQNSG (68 aa)) is disordered. Residues 24 to 46 (NPAAQPAREQQQAASAAPHTPQT) show a composition bias toward low complexity. The segment at residues 73-148 (HIECVVCGDK…VGMRREAVQR (76 aa)) is a DNA-binding region (nuclear receptor). NR C4-type zinc fingers lie at residues 76 to 96 (CVVC…CEGC) and 112 to 136 (CRAN…LKKC). One can recognise an NR LBD domain in the interval 174–400 (YLSGYISLLL…TLIRDMLLSG (227 aa)).

It belongs to the nuclear hormone receptor family. NR2 subfamily. As to expression, first expressed in 11-12 hour embryos. In the rostral brain of 13 hour embryos, expressed within the anterior half of the midbrain and the posterior part of the diencephalon. In the presumptive hindbrain, expressed in a segment-like stripe in the anterior region, resembling the presumptive rhombomere units of the hindbrain. Also detected in the intermediate mesoderm, posterior to the first somite. As somitogenesis proceeds, expression extends posteriorly and flanks the 10 most anterior somites. Expression changes extensively both in level and expansion of domains between 13 and 20 hours. In the rostral brain, expression extends to include a major part of the diencephalon and a caudal portion of the telencephalon. Within the hindbrain, strongly expressed in the two most anterior rhombomeres, and a lower but uniform expression is seen to extend throughout rhombomere 7. In 28 hour embryos, higher and more uniform expression is seen in both rostral and hindbrain areas. Also expressed in the retina of the eye.

The protein localises to the nucleus. In terms of biological role, putative transcription factor that is required in photoreceptor cells precursors during eye development. The sequence is that of Nuclear receptor subfamily 2 group F member 1-A (nr2f1a) from Danio rerio (Zebrafish).